The sequence spans 595 residues: O-phosphoseryl-tRNA(Sec) selenium transferase (595 aa).

R75 lines the pyridoxal 5'-phosphate pocket. Residues 96-106 (GRSGDLFSEQP) are phosphate loop (P-loop). Positions 97, 98, and 105 each coordinate substrate. Residues 174–187 (RTVTKDSTSATSAA) show a composition bias toward polar residues. Disordered stretches follow at residues 174–208 (RTVTKDSTSATSAAPVQEPPMSEADRDRHDRTSLP) and 257–278 (STNRDSLDRGQDSIGSPSTPTS). Over residues 196–205 (EADRDRHDRT) the composition is skewed to basic and acidic residues. TRNA is bound at residue R358. K371 carries the post-translational modification N6-(pyridoxal phosphate)lysine. Position 400 (R400) interacts with substrate.

It belongs to the SepSecS family. Homotetramer composed of two homodimers. Requires pyridoxal 5'-phosphate as cofactor.

The protein resides in the cytoplasm. The enzyme catalyses O-phospho-L-seryl-tRNA(Sec) + selenophosphate + H2O = L-selenocysteinyl-tRNA(Sec) + 2 phosphate. The protein operates within aminoacyl-tRNA biosynthesis; selenocysteinyl-tRNA(Sec) biosynthesis; selenocysteinyl-tRNA(Sec) from L-seryl-tRNA(Sec) (archaeal/eukaryal route): step 2/2. Functionally, converts O-phosphoseryl-tRNA(Sec) to selenocysteinyl-tRNA(Sec) required for selenoprotein biosynthesis. The protein is O-phosphoseryl-tRNA(Sec) selenium transferase of Leishmania donovani.